Reading from the N-terminus, the 210-residue chain is Large ribosomal subunit protein uL3 (210 aa).

A disordered region spans residues 133 to 156; that stretch reads ASHGNSLSHRVPGSIGQNQTPGKV. Q151 is subject to N5-methylglutamine.

It belongs to the universal ribosomal protein uL3 family. Part of the 50S ribosomal subunit. Forms a cluster with proteins L14 and L19. Post-translationally, methylated by PrmB.

Functionally, one of the primary rRNA binding proteins, it binds directly near the 3'-end of the 23S rRNA, where it nucleates assembly of the 50S subunit. The sequence is that of Large ribosomal subunit protein uL3 from Hamiltonella defensa subsp. Acyrthosiphon pisum (strain 5AT).